We begin with the raw amino-acid sequence, 356 residues long: Carbamoyl phosphate synthase small chain (356 aa).

The interval 1–160 (MKGYLKLEDG…TKKPYRIAGI (160 aa)) is CPSase. Residues Ser-45, Gly-211, and Gly-213 each coordinate L-glutamine. Positions 163-350 (KLAFIDLGTK…MDIVMVYKRR (188 aa)) constitute a Glutamine amidotransferase type-1 domain. The active-site Nucleophile is the Cys-238. Leu-239, Gln-242, Asn-280, Gly-282, and Tyr-283 together coordinate L-glutamine. Residues His-323 and Glu-325 contribute to the active site.

Belongs to the CarA family. In terms of assembly, composed of two chains; the small (or glutamine) chain promotes the hydrolysis of glutamine to ammonia, which is used by the large (or ammonia) chain to synthesize carbamoyl phosphate. Tetramer of heterodimers (alpha,beta)4.

The catalysed reaction is hydrogencarbonate + L-glutamine + 2 ATP + H2O = carbamoyl phosphate + L-glutamate + 2 ADP + phosphate + 2 H(+). It catalyses the reaction L-glutamine + H2O = L-glutamate + NH4(+). It participates in amino-acid biosynthesis; L-arginine biosynthesis; carbamoyl phosphate from bicarbonate: step 1/1. It functions in the pathway pyrimidine metabolism; UMP biosynthesis via de novo pathway; (S)-dihydroorotate from bicarbonate: step 1/3. Functionally, small subunit of the glutamine-dependent carbamoyl phosphate synthetase (CPSase). CPSase catalyzes the formation of carbamoyl phosphate from the ammonia moiety of glutamine, carbonate, and phosphate donated by ATP, constituting the first step of 2 biosynthetic pathways, one leading to arginine and/or urea and the other to pyrimidine nucleotides. The small subunit (glutamine amidotransferase) binds and cleaves glutamine to supply the large subunit with the substrate ammonia. The polypeptide is Carbamoyl phosphate synthase small chain (Caldanaerobacter subterraneus subsp. tengcongensis (strain DSM 15242 / JCM 11007 / NBRC 100824 / MB4) (Thermoanaerobacter tengcongensis)).